The following is a 256-amino-acid chain: Alcohol dehydrogenase (256 aa).

12–35 (FVAGLGGIGLDTSKELVKRDLKNL) contributes to the NAD(+) binding site. Ser-140 is a substrate binding site. Residue Tyr-153 is the Proton acceptor of the active site.

The protein belongs to the short-chain dehydrogenases/reductases (SDR) family. In terms of assembly, homodimer.

The catalysed reaction is a primary alcohol + NAD(+) = an aldehyde + NADH + H(+). The enzyme catalyses a secondary alcohol + NAD(+) = a ketone + NADH + H(+). The protein is Alcohol dehydrogenase (Adh) of Drosophila yakuba (Fruit fly).